A 155-amino-acid chain; its full sequence is uncharacterized protein (155 aa).

An N-terminal signal peptide occupies residues 1 to 19 (MPLSKTLVQKLQQAGMAIA).

This is an uncharacterized protein from Haemophilus influenzae (strain ATCC 51907 / DSM 11121 / KW20 / Rd).